The chain runs to 131 residues: Small ribosomal subunit protein uS8 (131 aa).

It belongs to the universal ribosomal protein uS8 family. As to quaternary structure, part of the 30S ribosomal subunit. Contacts proteins S5 and S12.

Its function is as follows. One of the primary rRNA binding proteins, it binds directly to 16S rRNA central domain where it helps coordinate assembly of the platform of the 30S subunit. The protein is Small ribosomal subunit protein uS8 of Pelagibacter ubique (strain HTCC1062).